The following is a 398-amino-acid chain: Probable aminomethyltransferase (398 aa).

The protein belongs to the GcvT family. The glycine cleavage system is composed of four proteins: P, T, L and H.

It carries out the reaction N(6)-[(R)-S(8)-aminomethyldihydrolipoyl]-L-lysyl-[protein] + (6S)-5,6,7,8-tetrahydrofolate = N(6)-[(R)-dihydrolipoyl]-L-lysyl-[protein] + (6R)-5,10-methylene-5,6,7,8-tetrahydrofolate + NH4(+). Functionally, the glycine cleavage system catalyzes the degradation of glycine. The protein is Probable aminomethyltransferase of Pyrococcus furiosus (strain ATCC 43587 / DSM 3638 / JCM 8422 / Vc1).